The chain runs to 351 residues: Pleckstrin (351 aa).

The region spanning 4–101 (KRIREGYLVK…WVRDTKKAIK (98 aa)) is the PH 1 domain. K64 carries the post-translational modification N6-acetyllysine. A phosphoserine mark is found at S113 and S117. The DEP domain maps to 136 to 221 (IEKGIKELNL…NPDAFYYFPD (86 aa)). The region spanning 244–348 (VIIKQGCLLK…WIKAIQVASR (105 aa)) is the PH 2 domain.

Functionally, major protein kinase C substrate of platelets. In Canis lupus familiaris (Dog), this protein is Pleckstrin (PLEK).